Reading from the N-terminus, the 357-residue chain is MNHPTLTIDPGAVAANWQALAARHTGEVAGVVKADAYGLGAALIAPALAAAGCRSFFVATLDEALSLRALLPAARIGVLNGCPPGEEGTMRARELRPVLGSLAACARWRGAAGDDKAPPSFLHLDTGMNRLGLDRDEAAHLIAHPTLLDGLGLTHVMTHLVAAEEPDASANAAQRERFAAFAARFPWLRTSLANSSGLFLGPGFGSDLARPGYALYGGNPTPTAANPMRPAIALAAPILQIRAIASGETVGYNGTWRAARPSRIATIGVGYADGLPRSLSNRLTARWQGKIIPVAGRLSMDLTTFDVTDHPDIAPGDVIELIGPGHDIDAFAAEAGTIGYEILTSLGPRYRRVVKSV.

Lysine 33 (proton acceptor; specific for D-alanine) is an active-site residue. The residue at position 33 (lysine 33) is an N6-(pyridoxal phosphate)lysine. Arginine 130 contacts substrate. Tyrosine 252 acts as the Proton acceptor; specific for L-alanine in catalysis. Methionine 300 contributes to the substrate binding site.

It belongs to the alanine racemase family. Pyridoxal 5'-phosphate is required as a cofactor.

The enzyme catalyses L-alanine = D-alanine. Its pathway is amino-acid biosynthesis; D-alanine biosynthesis; D-alanine from L-alanine: step 1/1. Its function is as follows. Catalyzes the interconversion of L-alanine and D-alanine. May also act on other amino acids. This is Alanine racemase (alr) from Acidiphilium cryptum (strain JF-5).